Reading from the N-terminus, the 155-residue chain is MIDRFLDKRNPREWLCLKRTVRFGETDAAGVVHFLELFRWCHETWEESLEKYGIALKDIFPTNEINTSQLDIALPVVHCEANYFQPLYVGDTINIELETEKINESSFVLRFKFKKNGEQIGSTNIKHVSINPITRKKCALSKQINLWLHESSSNF.

Aspartate 27 is an active-site residue.

The protein belongs to the 4-hydroxybenzoyl-CoA thioesterase family. DHNA-CoA hydrolase subfamily.

The catalysed reaction is 1,4-dihydroxy-2-naphthoyl-CoA + H2O = 1,4-dihydroxy-2-naphthoate + CoA + H(+). It functions in the pathway cofactor biosynthesis; phylloquinone biosynthesis. Its pathway is quinol/quinone metabolism; 1,4-dihydroxy-2-naphthoate biosynthesis; 1,4-dihydroxy-2-naphthoate from chorismate: step 7/7. Functionally, catalyzes the hydrolysis of 1,4-dihydroxy-2-naphthoyl-CoA (DHNA-CoA) to 1,4-dihydroxy-2-naphthoate (DHNA), a reaction involved in phylloquinone (vitamin K1) biosynthesis. This chain is 1,4-dihydroxy-2-naphthoyl-CoA hydrolase, found in Prochlorococcus marinus (strain NATL2A).